Here is a 490-residue protein sequence, read N- to C-terminus: Acetyl-coenzyme A carboxylase carboxyl transferase subunit beta, chloroplastic (490 aa).

The region spanning L228–N490 is the CoA carboxyltransferase N-terminal domain. C232, C235, C251, and C254 together coordinate Zn(2+). The segment at C232–C254 adopts a C4-type zinc-finger fold.

The protein belongs to the AccD/PCCB family. Acetyl-CoA carboxylase is a heterohexamer composed of biotin carboxyl carrier protein, biotin carboxylase and 2 subunits each of ACCase subunit alpha and ACCase plastid-coded subunit beta (accD). Requires Zn(2+) as cofactor.

It localises to the plastid. It is found in the chloroplast stroma. It catalyses the reaction N(6)-carboxybiotinyl-L-lysyl-[protein] + acetyl-CoA = N(6)-biotinyl-L-lysyl-[protein] + malonyl-CoA. It functions in the pathway lipid metabolism; malonyl-CoA biosynthesis; malonyl-CoA from acetyl-CoA: step 1/1. Functionally, component of the acetyl coenzyme A carboxylase (ACC) complex. Biotin carboxylase (BC) catalyzes the carboxylation of biotin on its carrier protein (BCCP) and then the CO(2) group is transferred by the transcarboxylase to acetyl-CoA to form malonyl-CoA. The sequence is that of Acetyl-coenzyme A carboxylase carboxyl transferase subunit beta, chloroplastic from Eucalyptus globulus subsp. globulus (Tasmanian blue gum).